We begin with the raw amino-acid sequence, 417 residues long: Serine--tRNA ligase (417 aa).

Threonine 225–glutamate 227 provides a ligand contact to L-serine. Position 256 to 258 (arginine 256 to glutamate 258) interacts with ATP. Glutamate 279 lines the L-serine pocket. Glutamate 343 to serine 346 serves as a coordination point for ATP. Residue threonine 379 coordinates L-serine.

It belongs to the class-II aminoacyl-tRNA synthetase family. Type-1 seryl-tRNA synthetase subfamily. In terms of assembly, homodimer. The tRNA molecule binds across the dimer.

It is found in the cytoplasm. The catalysed reaction is tRNA(Ser) + L-serine + ATP = L-seryl-tRNA(Ser) + AMP + diphosphate + H(+). It carries out the reaction tRNA(Sec) + L-serine + ATP = L-seryl-tRNA(Sec) + AMP + diphosphate + H(+). It participates in aminoacyl-tRNA biosynthesis; selenocysteinyl-tRNA(Sec) biosynthesis; L-seryl-tRNA(Sec) from L-serine and tRNA(Sec): step 1/1. Functionally, catalyzes the attachment of serine to tRNA(Ser). Is also able to aminoacylate tRNA(Sec) with serine, to form the misacylated tRNA L-seryl-tRNA(Sec), which will be further converted into selenocysteinyl-tRNA(Sec). This is Serine--tRNA ligase from Mycoplasma genitalium (strain ATCC 33530 / DSM 19775 / NCTC 10195 / G37) (Mycoplasmoides genitalium).